Here is a 517-residue protein sequence, read N- to C-terminus: Ammonium transporter 3 (517 aa).

The Extracellular segment spans residues 1 to 32 (MLNEPNALLRRDANSTIATVTELFPNEYSNAD). The helical transmembrane segment at 33–53 (IAYVLLSTVVVFTVTPGIALY) threads the bilayer. Over 54-69 (YAGMVRKNSALSILTQ) the chain is Cytoplasmic. Residues 70-90 (SFLVTAVVFIQWYLFGYSLAC) form a helical membrane-spanning segment. At 91-118 (SSGSSFYGTLWQGGMNHLWLEPYIPGST) the chain is on the extracellular side. A helical transmembrane segment spans residues 119–139 (IPAIVYFPFGGLFAVATAQLF). Topologically, residues 140–148 (AGAMAERGR) are cytoplasmic. The helical transmembrane segment at 149 to 169 (LIPSLVISFLYITLVYCPQAY) threads the bilayer. Residues 170 to 180 (WTWAPNGWLYT) lie on the Extracellular side of the membrane. Residues 181 to 201 (LGALDFAGGGPVHISSGFAAL) traverse the membrane as a helical segment. Over 202 to 272 (AYSLCLGRRI…AHNPPHDAGM (71 aa)) the chain is Cytoplasmic. A helical membrane pass occupies residues 273 to 293 (VYIGVVLIWFAWLCFNSGTLL). Residues 294-299 (TVNIRT) are Extracellular-facing. Residues 300 to 320 (AYIMTNTLISSSFGALTWAII) traverse the membrane as a helical segment. Residues 321–327 (DYIRYRK) lie on the Cytoplasmic side of the membrane. The helical transmembrane segment at 328–348 (FSTIGICEGAIAGLVGITPAC) threads the bilayer. Residue glycine 349 is a topological domain, extracellular. Residues 350-370 (FVFPWGAAAGGIVPALVCNFL) traverse the membrane as a helical segment. The Cytoplasmic portion of the chain corresponds to 371-384 (HDLNEWIGVDETLR). The chain crosses the membrane as a helical span at residues 385 to 405 (VFNLHGIGGIVGSIVLGVVAH). Over 406–432 (PDVAASDGATVIDGGWAVHHWKQMGYQ) the chain is Extracellular. A helical membrane pass occupies residues 433 to 453 (FAGFTSVAAWSFVITAIICLL). Residues 454–517 (VDLVPGLHIR…NIKQEKQDEF (64 aa)) lie on the Cytoplasmic side of the membrane.

Belongs to the ammonia transporter channel (TC 1.A.11.2) family.

Its subcellular location is the membrane. Functionally, transporter for ammonium to use as a nitrogen source. The polypeptide is Ammonium transporter 3 (amt3) (Schizosaccharomyces pombe (strain 972 / ATCC 24843) (Fission yeast)).